A 623-amino-acid chain; its full sequence is V-type proton ATPase catalytic subunit A (623 aa).

Residue 252–259 coordinates ATP; the sequence is GAFGCGKT.

It belongs to the ATPase alpha/beta chains family. In terms of assembly, V-ATPase is a heteromultimeric enzyme composed of a peripheral catalytic V1 complex (main components: subunits A, B, C, D, E, and F) attached to an integral membrane V0 proton pore complex (main component: the proteolipid protein).

It carries out the reaction ATP + H2O + 4 H(+)(in) = ADP + phosphate + 5 H(+)(out). Catalytic subunit of the peripheral V1 complex of vacuolar ATPase. V-ATPase vacuolar ATPase is responsible for acidifying a variety of intracellular compartments in eukaryotic cells. The polypeptide is V-type proton ATPase catalytic subunit A (Brassica napus (Rape)).